The following is a 335-amino-acid chain: Phenylalanine--tRNA ligase alpha subunit (335 aa).

Glu-262 provides a ligand contact to Mg(2+).

It belongs to the class-II aminoacyl-tRNA synthetase family. Phe-tRNA synthetase alpha subunit type 1 subfamily. Tetramer of two alpha and two beta subunits. Mg(2+) is required as a cofactor.

Its subcellular location is the cytoplasm. The enzyme catalyses tRNA(Phe) + L-phenylalanine + ATP = L-phenylalanyl-tRNA(Phe) + AMP + diphosphate + H(+). In Prochlorococcus marinus (strain MIT 9313), this protein is Phenylalanine--tRNA ligase alpha subunit.